The chain runs to 347 residues: MARAWVCLAGAAFFLSCLVLHSRFCGSLVSRTFSFHVSWRMEDPLFRLDLGWPKNSEYFTGATFCVAVDSLNGLVYVAQRGDNIPKVLVFSEDGYFLRAWNYTVDTPHGMFVSGTPFEQSVWITDVGSGPYGHTVKKYNSLGDLVQVLGTPGKKGTGLNPLQFDNPAELYVDDTGEMYIVDGDGGLNNRLVKLSQDFMILWLRGENGTGPAKFNIPHSVTLDAVGRVWVADRGNKRLQVFDKDTGEWLGAWDNCFTEEGPSAVRFTPDGKYLIVAQLNLSRLSVLLAPPSGSIGDCSVVSTIQLADQVLPHLLEVDRKTGAVYVAEIGAKQIQKYIPWHSRTPAFGA.

The signal sequence occupies residues 1 to 22 (MARAWVCLAGAAFFLSCLVLHS). The NHL 1 repeat unit spans residues 47–93 (RLDLGWPKNSEYFTGATFCVAVDSLNGLVYVAQRGDNIPKVLVFSED). Asparagine 101 is a glycosylation site (N-linked (GlcNAc...) asparagine). NHL repeat units lie at residues 150–196 (TPGK…LSQD) and 200–243 (LWLR…FDKD). 2 N-linked (GlcNAc...) asparagine glycosylation sites follow: asparagine 206 and asparagine 278. Residues 294–338 (GDCSVVSTIQLADQVLPHLLEVDRKTGAVYVAEIGAKQIQKYIPW) form an NHL 4 repeat.

This Mus musculus (Mouse) protein is NHL repeat-containing protein 3 (Nhlrc3).